A 306-amino-acid polypeptide reads, in one-letter code: Lipid A biosynthesis palmitoleoyltransferase (306 aa).

Residues 20–40 (WFGLGVLWLWVQLPYPVLCFL) traverse the membrane as a helical segment. An HXXXXD motif motif is present at residues 132-137 (HFMSLE).

It belongs to the LpxL/LpxM/LpxP family. LpxP subfamily.

The protein localises to the cell inner membrane. The enzyme catalyses (9Z)-hexadecenoyl-[ACP] + alpha-Kdo-(2-&gt;4)-alpha-Kdo-(2-&gt;6)-lipid IVA (E. coli) = (9Z)-hexadecenoyl-(Kdo)2-lipid IVA (E. coli) + holo-[ACP]. The protein operates within bacterial outer membrane biogenesis; lipopolysaccharide biosynthesis. Its function is as follows. Catalyzes the transfer of palmitoleate from palmitoleoyl-[acyl-carrier-protein] (ACP) to Kdo(2)-lipid IV(A) to form Kdo(2)-(palmitoleoyl)-lipid IV(A). Required for the biosynthesis of a distinct molecular species of lipid A, which is present only in cells grown at low temperatures. It may confer a selective advantage to cells growing at lower temperatures by making the outer membrane a more effective barrier to harmful chemicals. This is Lipid A biosynthesis palmitoleoyltransferase from Escherichia coli (strain K12).